Consider the following 145-residue polypeptide: Putative esterase PA1618 (145 aa).

This sequence belongs to the thioesterase PaaI family.

The protein is Putative esterase PA1618 of Pseudomonas aeruginosa (strain ATCC 15692 / DSM 22644 / CIP 104116 / JCM 14847 / LMG 12228 / 1C / PRS 101 / PAO1).